Reading from the N-terminus, the 335-residue chain is Anthranilate phosphoribosyltransferase (335 aa).

Residues G79, 82 to 83, T87, 89 to 92, 107 to 115, and S119 each bind 5-phospho-alpha-D-ribose 1-diphosphate; these read GD, NVST, and KHCNKGVSS. G79 contributes to the anthranilate binding site. S91 is a binding site for Mg(2+). N110 serves as a coordination point for anthranilate. R165 is a binding site for anthranilate. D223 and E224 together coordinate Mg(2+).

This sequence belongs to the anthranilate phosphoribosyltransferase family. Homodimer. Requires Mg(2+) as cofactor.

It carries out the reaction N-(5-phospho-beta-D-ribosyl)anthranilate + diphosphate = 5-phospho-alpha-D-ribose 1-diphosphate + anthranilate. The protein operates within amino-acid biosynthesis; L-tryptophan biosynthesis; L-tryptophan from chorismate: step 2/5. Functionally, catalyzes the transfer of the phosphoribosyl group of 5-phosphorylribose-1-pyrophosphate (PRPP) to anthranilate to yield N-(5'-phosphoribosyl)-anthranilate (PRA). The chain is Anthranilate phosphoribosyltransferase from Buchnera aphidicola subsp. Schizaphis graminum (strain Sg).